A 285-amino-acid chain; its full sequence is Phosphatidylglycerol--prolipoprotein diacylglyceryl transferase (285 aa).

5 helical membrane-spanning segments follow: residues 17–37 (ALGL…GLTL), 43–63 (WYAL…LFLL), 78–98 (LVFW…VLFY), 113–133 (WEGG…IWWV), and 139–159 (LSWL…LFLG). Arg-160 contributes to the a 1,2-diacyl-sn-glycero-3-phospho-(1'-sn-glycerol) binding site. The next 3 membrane-spanning stretches (helical) occupy residues 195–215 (LYEA…QFFA), 223–243 (GKLA…VEWF), and 256–276 (GLTM…WLII).

Belongs to the Lgt family.

Its subcellular location is the cell inner membrane. It carries out the reaction L-cysteinyl-[prolipoprotein] + a 1,2-diacyl-sn-glycero-3-phospho-(1'-sn-glycerol) = an S-1,2-diacyl-sn-glyceryl-L-cysteinyl-[prolipoprotein] + sn-glycerol 1-phosphate + H(+). Its pathway is protein modification; lipoprotein biosynthesis (diacylglyceryl transfer). In terms of biological role, catalyzes the transfer of the diacylglyceryl group from phosphatidylglycerol to the sulfhydryl group of the N-terminal cysteine of a prolipoprotein, the first step in the formation of mature lipoproteins. This chain is Phosphatidylglycerol--prolipoprotein diacylglyceryl transferase, found in Zymomonas mobilis subsp. mobilis (strain ATCC 31821 / ZM4 / CP4).